The following is an 88-amino-acid chain: Probable oxaloacetate decarboxylase gamma chain (88 aa).

Residues 13–35 (LMFSGMGFVIIFLLILIWAIGIV) traverse the membrane as a helical segment.

It belongs to the OadG family. As to quaternary structure, heterotrimer of an alpha, a beta and a gamma subunit. It depends on Na(+) as a cofactor.

It localises to the cell membrane. The catalysed reaction is oxaloacetate + 2 Na(+)(in) + H(+) = pyruvate + 2 Na(+)(out) + CO2. Its function is as follows. Catalyzes the decarboxylation of oxaloacetate coupled to Na(+) translocation. This Mannheimia succiniciproducens (strain KCTC 0769BP / MBEL55E) protein is Probable oxaloacetate decarboxylase gamma chain.